The following is a 384-amino-acid chain: uncharacterized protein (384 aa).

Disordered regions lie at residues 133 to 257 and 297 to 368; these read RQNS…TNQD and ERTP…STAT. Residues 143–157 are compositionally biased toward low complexity; the sequence is PSTSSEPEPQPSTSS. Acidic residues predominate over residues 302–315; that stretch reads DQTDITDDSADWSE. A compositionally biased stretch (basic and acidic residues) spans 316–342; sequence GETRRPSHSEVGERRLSRENNSEDPNR. Basic residues predominate over residues 343–363; sequence SRSRSRSRERRRRRPRVRPGR.

This is an uncharacterized protein from Gallid herpesvirus 2 (strain Chicken/Md5/ATCC VR-987) (GaHV-2).